Consider the following 1139-residue polypeptide: Solute carrier family 12 member 5 (1139 aa).

Disordered regions lie at residues 1 to 62 and 95 to 116; these read MSRR…KGRE and PQGS…KPVQ. Residues 1–98 lie on the Cytoplasmic side of the membrane; sequence MSRRFTVTSL…ANYTNLPQGS (98 aa). Over residues 21–45 the composition is skewed to basic and acidic residues; sequence PESRRHSVADPRRLPREDVKGDGNP. A compositionally biased stretch (polar residues) spans 46–55; it reads KESSPFINST. Phosphothreonine is present on Thr57. The segment covering 98-111 has biased composition (basic and acidic residues); the sequence is SKEHEEAENNEGGK. A discontinuously helical membrane pass occupies residues 99–120; the sequence is KEHEEAENNEGGKKKPVQAPRM. Lys113 contacts K(+). Over 121-129 the chain is Extracellular; that stretch reads GTFMGVYLP. A helical transmembrane segment spans residues 130 to 151; sequence CLQNIFGVILFLRLTWVVGIAG. The Cytoplasmic portion of the chain corresponds to 152 to 174; that stretch reads IMESFCMVFICCSCTMLTAISMS. Residues 175–203 form a helical membrane-spanning segment; sequence AIATNGVVPAGGSYYMISRSLGPEFGGAV. Ala184 contributes to the chloride binding site. Topologically, residues 204–229 are extracellular; it reads GLCFYLGTTFAGAMYILGTIEILLAY. The next 2 helical transmembrane spans lie at 230 to 250 and 251 to 276; these read LFPA…AAML and NNMR…KYVN. Residues 277-402 lie on the Extracellular side of the membrane; it reads KFALVFLGCV…ERRGMPSVGL (126 aa). An intrachain disulfide couples Cys310 to Cys325. 4 N-linked (GlcNAc...) asparagine glycosylation sites follow: Asn314, Asn333, Asn351, and Asn362. Cys345 and Cys354 are joined by a disulfide. Residues 403 to 420 traverse the membrane as a helical segment; the sequence is ADGTPVDMDHPYVFSDMT. Position 410 (Met410) interacts with K(+). Chloride is bound by residues Tyr414 and Val415. Over 421-429 the chain is Cytoplasmic; it reads SYFTLLVGI. The helical transmembrane segment at 430-453 threads the bilayer; it reads YFPSVTGIMAGSNRSGDLRDAQKS. Asp446 provides a ligand contact to K(+). At 454–485 the chain is on the extracellular side; it reads IPTGTILAIATTSAVYISSVVLFGACIEGVVL. Residues 486–513 traverse the membrane as a helical segment; that stretch reads RDKFGEAVNGNLVVGTLAWPSPWVIVIG. The Cytoplasmic portion of the chain corresponds to 514–534; that stretch reads SFFSTCGAGLQSLTGAPRLLQ. 2 consecutive transmembrane segments (helical) span residues 535–555 and 556–578; these read AISR…KANG and EPTW…ASLD. A chloride-binding site is contributed by Glu569. Topologically, residues 579-592 are cytoplasmic; that stretch reads EVAPILSMFFLMCY. 2 helical membrane passes run 593 to 615 and 616 to 632; these read MFVN…PRFR and YYHW…CLAL. Residues 633–1139 are Cytoplasmic-facing; that stretch reads MFICSWYYAL…GGREVITIYS (507 aa). The tract at residues 667 to 681 is scissor helix; sequence GIRGLSLSAARYALL. Phosphothreonine; by OXSR1 and STK39 is present on Thr929. Positions 943–1025 are disordered; sequence HLTKNERERE…PEGEGETDPE (83 aa). The span at 945–962 shows a compositional bias: basic and acidic residues; that stretch reads TKNEREREIQSITDESRG. Positions 982 to 994 are enriched in acidic residues; sequence TACDNEEKPEEEV. Over residues 1003–1012 the composition is skewed to low complexity; that stretch reads PSCPSSSPSP. Thr1030 is modified (phosphothreonine; by OXSR1 and STK39). The interval 1033-1052 is disordered; sequence KDKSAAQKNKGPSPVSSEGI. Residues Ser1045, Ser1048, and Ser1049 each carry the phosphoserine modification.

The protein belongs to the SLC12A transporter family. K/Cl co-transporter subfamily. In terms of assembly, homodimer; adopts a domain-swap conformation at the scissor helices connecting the transmembrane domain and C-terminal domain. Heterodimer wHeterodimer with K-Cl cotransporters SLC12A6 and SLC12A7. Interacts with AP2A1. Phosphorylated at Thr-929 and Thr-1030 by OXSR1/OSR1 and STK39/SPAK downstream of WNK kinases (WNK1, WNK2, WNK3 or WNK4), inhibiting the potassium-chloride cotransport activity. In terms of tissue distribution, highly expressed in brain. Not detected in other tissues. Highly expressed in pyramidal neurons and in neurons throughout the cortex, hippocampus, the granular layer of the cerebellum and in groups of neurons throughout the brainstem. Barely detectable in dorsal-root ganglions.

The protein resides in the cell membrane. The protein localises to the cell projection. It is found in the dendrite. It carries out the reaction K(+)(in) + chloride(in) = K(+)(out) + chloride(out). With respect to regulation, inhibited following phosphorylation by OXSR1/OSR1 and STK39/SPAK: phosphorylation takes place downstream of WNK kinases (WNK1, WNK2, WNK3 or WNK4) in response to hyperosmotic stress and subsequent cell shrinkage. In terms of biological role, mediates electroneutral potassium-chloride cotransport in mature neurons and is required for neuronal Cl(-) homeostasis. As major extruder of intracellular chloride, it establishes the low neuronal Cl(-) levels required for chloride influx after binding of GABA-A and glycine to their receptors, with subsequent hyperpolarization and neuronal inhibition. Involved in the regulation of dendritic spine formation and maturation. This Rattus norvegicus (Rat) protein is Solute carrier family 12 member 5 (Slc12a5).